A 792-amino-acid polypeptide reads, in one-letter code: Type 2 topoisomerase subunit B (792 aa).

The region spanning 423–537 is the Toprim domain; the sequence is CEIFLVEGDS…EGYVYIAEPP (115 aa). Mg(2+)-binding residues include Glu-429, Asp-502, and Asp-504.

It belongs to the type II topoisomerase GyrB family. Heterotetramer, composed of two GyrA and two GyrB chains. In the heterotetramer, 'GyrA' contains the active site tyrosine that forms a transient covalent intermediate with DNA, while 'GyrB' binds cofactors and catalyzes ATP hydrolysis. The cofactor is Mg(2+). Mn(2+) is required as a cofactor. Ca(2+) serves as cofactor.

It localises to the cytoplasm. It carries out the reaction ATP-dependent breakage, passage and rejoining of double-stranded DNA.. A type II topoisomerase. Despite its similarity to DNA gyrase, this enzyme is not able to supercoil DNA, and instead acts like topoisomerase IV. Relaxes both positively and negatively supercoiled DNA in an ATP-dependent fashion, decatenates interlocked circles. If this subunit is reconstituted with GyrA from E.coli the hybrid enzyme supercoils relaxed plasmid DNA; if paired with E.coli ParC supercoiling is not restored. This the first bacteria shown to not contain DNA gyrase, although it has 2 copies of a reverse gyrase that introduces positive supercoils. Type II topoisomerases break and join 2 DNA strands simultaneously in an ATP-dependent manner. This chain is Type 2 topoisomerase subunit B, found in Aquifex aeolicus (strain VF5).